A 731-amino-acid chain; its full sequence is Replication restart protein PriA (731 aa).

The 3'BD stretch occupies residues 1 to 98 (MSVAHVALPV…HPIGDVLFHA (98 aa)). Positions 115–177 (WYWFATEQGQ…RGKGLAELAC (63 aa)) are WH. A helicase lobe 1 region spans residues 200-375 (TEQATAVGAI…VRQGKYRQLT (176 aa)). The region spanning 210–376 (HSAADRFSAW…RQGKYRQLTL (167 aa)) is the Helicase ATP-binding domain. 223 to 230 (GITGSGKT) is an ATP binding site. Residues Gly-226, Gly-228, Lys-229, Thr-230, Glu-231, and Arg-263 each contribute to the ADP site. Residues 319-322 (DEEH) carry the DEAH box motif. The Aromatic-rich loop (ARL) motif lies at 326 to 340 (YKQQEGWRYHARDLA). The segment at 387-430 (QQHVLDLKGQPLQAGLSPALISRMRQHLQADNQVILFLNRRGFA) is helicase lobe 2, N-terminus. The segment at 431-485 (PALLCHDCGWIAECPRCDSYYTLHQAQHHLRCHHCDSQRPIPRQCPSCGSTHLVP) is CRR. The Zn(2+) site is built by Cys-435, Cys-438, Cys-444, Cys-447, Cys-462, Cys-465, Cys-475, and Cys-478. In terms of domain architecture, Helicase C-terminal spans 470-637 (PIPRQCPSCG…QLPPWTSHVL (168 aa)). The helicase lobe 2, C-terminus stretch occupies residues 486 to 626 (VGIGTEQLEQ…AEQALAERQT (141 aa)). An ADP-binding site is contributed by Lys-543. Residues 633 to 731 (TSHVLIRAED…WVLDVDPIEG (99 aa)) form a CTD region.

It belongs to the helicase family. PriA subfamily. Binds SSB. Component of the replication restart primosome. Requires Zn(2+) as cofactor.

The catalysed reaction is Couples ATP hydrolysis with the unwinding of duplex DNA by translocating in the 3'-5' direction.. The enzyme catalyses ATP + H2O = ADP + phosphate + H(+). Its activity is regulated as follows. ATPase activity is stimulated by single-stranded binding protein (SSB). Its function is as follows. Initiates the restart of stalled replication forks, which reloads the replicative helicase on sites other than the origin of replication. Recognizes and binds to abandoned replication forks and remodels them to uncover a helicase loading site. Promotes assembly of the primosome at these replication forks. Recognizes abandoned replication forks and remodels SSB on ssDNA to uncover a loading site for DnaB. Binds replication fork DNA, has DNA-dependent ATPase activity in the presence of replication fork DNA, restores normal cell growth and SOS induction to E.coli mutant pirA304. The protein is Replication restart protein PriA of Klebsiella pneumoniae subsp. pneumoniae (strain ATCC 700721 / MGH 78578).